The following is a 260-amino-acid chain: Proteasome subunit alpha (260 aa).

The protein belongs to the peptidase T1A family. As to quaternary structure, the 20S proteasome core is composed of 14 alpha and 14 beta subunits that assemble into four stacked heptameric rings, resulting in a barrel-shaped structure. The two inner rings, each composed of seven catalytic beta subunits, are sandwiched by two outer rings, each composed of seven alpha subunits. The catalytic chamber with the active sites is on the inside of the barrel. Has a gated structure, the ends of the cylinder being occluded by the N-termini of the alpha-subunits. Is capped at one or both ends by the proteasome regulatory ATPase, PAN.

The protein resides in the cytoplasm. With respect to regulation, the formation of the proteasomal ATPase PAN-20S proteasome complex, via the docking of the C-termini of PAN into the intersubunit pockets in the alpha-rings, triggers opening of the gate for substrate entry. Interconversion between the open-gate and close-gate conformations leads to a dynamic regulation of the 20S proteasome proteolysis activity. Its function is as follows. Component of the proteasome core, a large protease complex with broad specificity involved in protein degradation. In Thermococcus gammatolerans (strain DSM 15229 / JCM 11827 / EJ3), this protein is Proteasome subunit alpha.